A 350-amino-acid chain; its full sequence is Flap endonuclease 1 (350 aa).

The interval 1-102 (MGVTALRELI…REIERRQKLK (102 aa)) is N-domain. 7 residues coordinate Mg(2+): D31, D84, E156, E158, D177, D179, and D240. Residues 120–261 (EARKYAQMSA…TALRYVKSYG (142 aa)) are I-domain. Positions 339–347 (KQSTLDMFF) are interaction with PCNA.

The protein belongs to the XPG/RAD2 endonuclease family. FEN1 subfamily. Interacts with PCNA. PCNA stimulates the nuclease activity without altering cleavage specificity. The cofactor is Mg(2+).

Structure-specific nuclease with 5'-flap endonuclease and 5'-3' exonuclease activities involved in DNA replication and repair. During DNA replication, cleaves the 5'-overhanging flap structure that is generated by displacement synthesis when DNA polymerase encounters the 5'-end of a downstream Okazaki fragment. Binds the unpaired 3'-DNA end and kinks the DNA to facilitate 5' cleavage specificity. Cleaves one nucleotide into the double-stranded DNA from the junction in flap DNA, leaving a nick for ligation. Also involved in the base excision repair (BER) pathway. Acts as a genome stabilization factor that prevents flaps from equilibrating into structures that lead to duplications and deletions. Also possesses 5'-3' exonuclease activity on nicked or gapped double-stranded DNA. This is Flap endonuclease 1 from Ignicoccus hospitalis (strain KIN4/I / DSM 18386 / JCM 14125).